We begin with the raw amino-acid sequence, 94 residues long: Putative FXYD domain-containing ion transport regulator 8 (94 aa).

A signal peptide spans 1-18 (MEVVLIFVYSLLVPVVLA). Over 19–34 (SAAKEKEIDPFHYNYQ) the chain is Extracellular. Residues 35–58 (TLRIGGLVFDVVLFLVPSCHLLSH) form a helical membrane-spanning segment. Topologically, residues 59 to 94 (RCKCSFNQKPQDPGDKEAQVENFITANAKEPQKAKN) are cytoplasmic. A disordered region spans residues 66–94 (QKPQDPGDKEAQVENFITANAKEPQKAKN).

The protein belongs to the FXYD family.

Its subcellular location is the membrane. This chain is Putative FXYD domain-containing ion transport regulator 8 (FXYD6P3), found in Homo sapiens (Human).